The following is a 470-amino-acid chain: Ras-like GTPase HI_1637 (470 aa).

The Walker A motif signature appears at 27-34 (GLSRSGKT). GTP-binding residues include S29, G32, K33, T34, A35, W98, S101, T102, R103, K342, D344, and H345. GDP-binding residues include G32, K33, T34, A35, W98, S101, and T102. GDP-binding residues include K342, D344, H345, A383, and V384. V384 contacts GTP.

The protein to E.coli YcjX. Monomer in solution. Mg(2+) serves as cofactor.

It catalyses the reaction GTP + H2O = GDP + phosphate + H(+). Alternates between an inactive form bound to GDP and an active form bound to GTP. Likely activated by a guanine nucleotide-exchange factor (GEF). Binds GTP and GDP. Has intrinsic GTPase activity. Does not hydrolyze ATP. May act as a transducer of stress responses. The protein is Ras-like GTPase HI_1637 of Haemophilus influenzae (strain ATCC 51907 / DSM 11121 / KW20 / Rd).